We begin with the raw amino-acid sequence, 698 residues long: Polyribonucleotide nucleotidyltransferase (698 aa).

2 residues coordinate Mg(2+): Asp-485 and Asp-491. Positions 552 to 611 constitute a KH domain; that stretch reads PRITTIKINPEKIRDVIGKGGAVIRALTEETGTTIELDDDGTVKIASSNGEATKEAIRRI. Positions 621-689 constitute an S1 motif domain; that stretch reads GRVYNGKVIR…RQGRVRLSIK (69 aa).

Belongs to the polyribonucleotide nucleotidyltransferase family. In terms of assembly, component of the RNA degradosome, which is a multiprotein complex involved in RNA processing and mRNA degradation. Requires Mg(2+) as cofactor.

The protein resides in the cytoplasm. The catalysed reaction is RNA(n+1) + phosphate = RNA(n) + a ribonucleoside 5'-diphosphate. In terms of biological role, involved in mRNA degradation. Catalyzes the phosphorolysis of single-stranded polyribonucleotides processively in the 3'- to 5'-direction. The protein is Polyribonucleotide nucleotidyltransferase of Shewanella denitrificans (strain OS217 / ATCC BAA-1090 / DSM 15013).